The following is a 291-amino-acid chain: Pyridoxal 5'-phosphate synthase subunit PdxS (291 aa).

Asp-23 is a binding site for D-ribose 5-phosphate. Residue Lys-80 is the Schiff-base intermediate with D-ribose 5-phosphate of the active site. Position 152 (Gly-152) interacts with D-ribose 5-phosphate. D-glyceraldehyde 3-phosphate is bound at residue Arg-164. D-ribose 5-phosphate-binding positions include Gly-213 and 234-235 (GS).

The protein belongs to the PdxS/SNZ family. In the presence of PdxT, forms a dodecamer of heterodimers.

It catalyses the reaction aldehydo-D-ribose 5-phosphate + D-glyceraldehyde 3-phosphate + L-glutamine = pyridoxal 5'-phosphate + L-glutamate + phosphate + 3 H2O + H(+). It functions in the pathway cofactor biosynthesis; pyridoxal 5'-phosphate biosynthesis. Functionally, catalyzes the formation of pyridoxal 5'-phosphate from ribose 5-phosphate (RBP), glyceraldehyde 3-phosphate (G3P) and ammonia. The ammonia is provided by the PdxT subunit. Can also use ribulose 5-phosphate and dihydroxyacetone phosphate as substrates, resulting from enzyme-catalyzed isomerization of RBP and G3P, respectively. This Bifidobacterium longum (strain DJO10A) protein is Pyridoxal 5'-phosphate synthase subunit PdxS.